Reading from the N-terminus, the 504-residue chain is FAD-dependent monooxygenase nsrK (504 aa).

Residue Arg-146 participates in FAD binding. Arg-227 is a catalytic residue. 2 residues coordinate FAD: Asp-340 and Gly-353.

The protein belongs to the paxM FAD-dependent monooxygenase family. It depends on FAD as a cofactor.

It participates in secondary metabolite biosynthesis. Functionally, FAD-dependent monooxygenase; part of the gene cluster that mediates the biosynthesis of the tetrahydroxanthone dimer neosartorin, which exhibits antibacterial activity. The two different monomeric units appear to be synthesized by the same set of enzymes, among which the Baeyer-Villiger monooxygenase nsrF is the key enzyme for the divergence of the biosynthetic routes. The pathway begins with the synthesis of atrochrysone thioester by the polyketide synthase nsrB. The atrochrysone carboxyl ACP thioesterase nsrC then breaks the thioester bond and releases the atrochrysone carboxylic acid from AacuL. Atrochrysone carboxylic acid is decarboxylated by the decarboxylase nsrE, and oxidized by the anthrone oxygenase nsrD to yield emodin. Emodin is then reduced to emodin hydroquinone by the oxidoreductase nsrR. A-ring reduction by the short chain dehydrogenase nsrJ, dehydration by the scytalone dehydratase-like protein nsrI and probable spontaneous re-oxidation, results in overall deoxygenation to chrysophanol. The Baeyer-Villiger monooxygenase nsrF accepts chrysophanol as a substrate to insert one oxygen atom at two different positions to yield the precursors of both monomric units. NsrF is promiscuous/flexible in interacting with the 2 (non methylated and methylated) aromatic rings of chrysophanol, thus diverging the biosynthetic pathway at this point. After the hydrolysis of the lactones, methylesterification by the methyltransferase nsrG yields respectively moniliphenone and 2,2',6'-trihydroxy-4-methyl-6-methoxya-cyldiphenylmethanone. The next steps are the hydroxylation by the FAD-dependent monooxygenase nsrK, followed by isomerization by the monooxygenase nsrQ. The short chain dehydrogenase/reductase nsrO then catalyzes the C-5 ketoreduction to give the xanthone skeleton of blennolide C and 5-acetylblennolide A. The acetyltransferase nsrL has a strict substrate specificity and uses only blennolide A but not blennolide C to yield 5-acetylblennolide A as the single-acetylated product. In the final step of the biosynthesis, the heterodimerization of the 2 xanthones, blennolide C and 5-acetylblennolide A, is catalyzed by the cytochrome P450 monooxygenase nsrP. NsrP can utilize at least three different xanthones as its substrates to perform the dimerization reaction. This is FAD-dependent monooxygenase nsrK from Aspergillus novofumigatus (strain IBT 16806).